Here is a 193-residue protein sequence, read N- to C-terminus: Acyl carrier protein phosphodiesterase (193 aa).

The protein belongs to the AcpH family.

It carries out the reaction holo-[ACP] + H2O = apo-[ACP] + (R)-4'-phosphopantetheine + H(+). Converts holo-ACP to apo-ACP by hydrolytic cleavage of the phosphopantetheine prosthetic group from ACP. The sequence is that of Acyl carrier protein phosphodiesterase from Klebsiella pneumoniae (strain 342).